We begin with the raw amino-acid sequence, 152 residues long: UPF0178 protein YaiI (152 aa).

It belongs to the UPF0178 family.

This is UPF0178 protein YaiI from Shigella flexneri.